A 3677-amino-acid polypeptide reads, in one-letter code: Dystrophin (3677 aa).

The tract at residues 1–240 is actin-binding; the sequence is MLWWEEVEDC…YITSLFQVLP (240 aa). Calponin-homology (CH) domains follow at residues 15–119 and 134–240; these read DVQK…LHWQ and TNSE…QVLP. The ANK2- and ANK-3 binding stretch occupies residues 63–72; sequence PKEKGSTRVH. 23 Spectrin repeats span residues 342-447, 451-557, 560-668, 728-828, 831-935, 944-1046, 1049-1154, 1163-1264, 1268-1464, 1469-1569, 1573-1676, 1680-1777, 1779-1875, 1878-1980, 2001-2098, 2106-2209, 2215-2316, 2317-2415, 2465-2569, 2576-2678, 2682-2786, 2800-2922, and 2927-3032; these read LDSY…SNLH, MDLQ…LLQD, LKWQ…QISQ, DITE…NWLE, NNII…ELQT, RYQE…KLEE, NKLR…EALK, LQKD…TLEE, CWHE…LFQK, EQRL…QLEK, LSRK…NLLL, KHME…TGKA, IPLK…KALE, HQWY…TLHE, YLTE…ERQG, KWRH…RVEE, SEFQ…GELE, VHIK…LRTK, ADFN…QLNE, QWLE…ALEE, LLQQ…KKSL, KRLH…RKID, and RLQE…QLHE. Positions 1416–1914 are interaction with SYNM; that stretch reads SDLTSHEISL…PEPRDERKIK (499 aa). The WW domain maps to 3047-3080; that stretch reads TSVQGPWERAISPNKVPYYINHETQTTCWDHPKM. The segment at 3050-3400 is interaction with SYNM; sequence QGPWERAISP…TVLEGDNMET (351 aa). The ZZ-type; degenerate zinc-finger motif lies at 3300–3356; it reads KHQAKCNICKECPIIGFRYRSLKHFNYDICQSCFFSGRVAKGHKMHYPMVEYCTPTT. Residues cysteine 3305, cysteine 3308, cysteine 3329, and cysteine 3332 each contribute to the Zn(2+) site. Residues 3458–3510 form a binds to SNTB1 region; the sequence is DDEHLLIQHYCQSLNQDSPLSQPRSPAQILISLESEERGELERILADLEEENR. Phosphoserine occurs at positions 3475, 3482, and 3492. Disordered regions lie at residues 3520-3546 and 3595-3677; these read KQQHEHKGLSPLPSPPEMMPTSPQSPR and EAKV…EDTM. Polar residues-rich tracts occupy residues 3599 to 3618 and 3654 to 3664; these read NGTTVSSPSTSLQRSDSSQP and QLNNSFPSSRG. 6 positions are modified to phosphoserine: serine 3604, serine 3605, serine 3609, serine 3615, serine 3616, and serine 3658.

Interacts with SYNM. Interacts with the syntrophins SNTG1 and SNTG2. Interacts with KRT19. Component of the dystrophin-associated glycoprotein complex which is composed of three subcomplexes: a cytoplasmic complex comprised of DMD (or UTRN), DTNA and a number of syntrophins, such as SNTB1, SNTB2, SNTG1 and SNTG2, the transmembrane dystroglycan complex, and the sarcoglycan-sarcospan complex. Interacts with DAG1 (betaDAG1) with DMD; the interaction is inhibited by phosphorylation on the PPXY motif of DAG1. Interacts with SYNM; SNTA1 and SNTB1. Interacts with CMYA5. Directly interacts with ANK2 and ANK3; these interactions do not interfere with betaDAG1-binding and are necessary for proper localization in muscle cells. Identified in a dystroglycan complex that contains at least PRX, DRP2, UTRN, DMD and DAG1. Interacts with DTNB. Interacts with PGM5; the interaction is direct. Interacts with NOS1; localizes NOS1 to sarcolemma in muscle cells. In terms of tissue distribution, strongly expressed in skeletal muscle and weak expression observed in newborn brain which increases in adult brain.

The protein resides in the cell membrane. It localises to the sarcolemma. The protein localises to the cytoplasm. Its subcellular location is the cytoskeleton. It is found in the postsynaptic cell membrane. Functionally, anchors the extracellular matrix to the cytoskeleton via F-actin. Ligand for dystroglycan. Component of the dystrophin-associated glycoprotein complex which accumulates at the neuromuscular junction (NMJ) and at a variety of synapses in the peripheral and central nervous systems and has a structural function in stabilizing the sarcolemma. Also implicated in signaling events and synaptic transmission. This chain is Dystrophin (Dmd), found in Rattus norvegicus (Rat).